The chain runs to 586 residues: Chaperone protein HscA homolog (586 aa).

Belongs to the heat shock protein 70 family.

Its function is as follows. Chaperone involved in the maturation of iron-sulfur cluster-containing proteins. Has a low intrinsic ATPase activity which is markedly stimulated by HscB. The protein is Chaperone protein HscA homolog of Rickettsia typhi (strain ATCC VR-144 / Wilmington).